A 1125-amino-acid chain; its full sequence is tRNA (34-2'-O)-methyltransferase regulator WDR6 (1125 aa).

M1 bears the N-acetylmethionine mark. 19 WD repeats span residues 53-97 (VKRV…VVKV), 105-143 (RELW…LYDP), 147-189 (CMLQ…IWYP), 200-238 (APDR…LWKV), 247-285 (RVQN…VWSH), 289-327 (ILQA…LWHL), 335-376 (LGVS…LYDL), 381-422 (WEQL…VVPI), 425-470 (PTAA…ISAA), 476-520 (IFVK…LFPV), 559-598 (PVST…FVHG), 604-642 (VLRQ…VWSP), 645-684 (HEKL…LYRA), 739-785 (LIDI…VWAV), 848-897 (RNKH…LFLL), 905-950 (HLLA…FWDL), 974-1016 (GTPS…VFTL), 1040-1077 (EEYS…FWRL), and 1083-1125 (TFMN…NWYD).

The protein belongs to the WD repeat WDR6 family. In terms of assembly, interacts with FTSJ1; the interaction is direct, and required for 2'-O-methylation of position 34 in substrate tRNAs. Interacts with IRS4. Interacts with STK11/LKB1.

The protein resides in the cytoplasm. In terms of biological role, together with methyltransferase FTSJ1, methylates the 2'-O-ribose of nucleotides at position 34 of the tRNA anticodon loop of substrate tRNAs. Required for the correct positioning of the substrate tRNA for methylation. Required to suppress amino acid starvation-induced autophagy. Enhances the STK11/LKB1-induced cell growth suppression activity. The protein is tRNA (34-2'-O)-methyltransferase regulator WDR6 (Wdr6) of Mus musculus (Mouse).